A 246-amino-acid polypeptide reads, in one-letter code: Peroxisomal membrane protein 11A (246 aa).

At methionine 1–arginine 93 the chain is on the cytoplasmic side. Residues valine 94–valine 114 form a helical membrane-spanning segment. Over asparagine 115–asparagine 217 the chain is Lumenal. A helical membrane pass occupies residues leucine 218–tyrosine 238. Positions leucine 218 to tyrosine 238 are required for homodimerization, interaction with PEX11G, and peroxisomal localization. At proline 239 to arginine 246 the chain is on the cytoplasmic side.

The protein belongs to the peroxin-11 family. Homodimer. Heterodimer with PEX11G. Probably interacts with COPB2 and COPA. Interacts with PEX19. Interacts with FIS1. In terms of tissue distribution, strongly expressed in liver and at lower levels in heart, brain, kidney and testis.

It localises to the peroxisome membrane. May be involved in peroxisomal proliferation and may regulate peroxisomes division. May mediate binding of coatomer proteins to the peroxisomal membrane. Promotes membrane protrusion and elongation on the peroxisomal surface. The polypeptide is Peroxisomal membrane protein 11A (Pex11a) (Mus musculus (Mouse)).